The following is a 672-amino-acid chain: Transketolase (672 aa).

Residue His-35 participates in substrate binding. Residues His-75 and 124–126 (GPL) each bind thiamine diphosphate. Asp-162 provides a ligand contact to Mg(2+). Positions 163 and 192 each coordinate thiamine diphosphate. 2 residues coordinate Mg(2+): Asn-192 and Ile-194. Substrate contacts are provided by His-266, Arg-361, and Ser-388. His-266 lines the thiamine diphosphate pocket. Residue Glu-415 is the Proton donor of the active site. Phe-441 serves as a coordination point for thiamine diphosphate. 3 residues coordinate substrate: His-465, Asp-473, and Arg-524.

It belongs to the transketolase family. As to quaternary structure, homodimer. Requires Mg(2+) as cofactor. It depends on Ca(2+) as a cofactor. The cofactor is Mn(2+). Co(2+) is required as a cofactor. Thiamine diphosphate serves as cofactor.

The catalysed reaction is D-sedoheptulose 7-phosphate + D-glyceraldehyde 3-phosphate = aldehydo-D-ribose 5-phosphate + D-xylulose 5-phosphate. It participates in carbohydrate biosynthesis; Calvin cycle. Its pathway is carbohydrate degradation; pentose phosphate pathway. Catalyzes the transfer of a two-carbon ketol group from a ketose donor to an aldose acceptor, via a covalent intermediate with the cofactor thiamine pyrophosphate. In Rhodobacter capsulatus (strain ATCC BAA-309 / NBRC 16581 / SB1003), this protein is Transketolase (tktA).